Here is a 518-residue protein sequence, read N- to C-terminus: GMP synthase [glutamine-hydrolyzing] (518 aa).

Positions 6–200 constitute a Glutamine amidotransferase type-1 domain; the sequence is RLLIIDFGSQ…FVKLAGFKGD (195 aa). Cysteine 84 acts as the Nucleophile in catalysis. Catalysis depends on residues histidine 175 and glutamate 177. A GMPS ATP-PPase domain is found at 201–393; that stretch reads WTMGAYREEA…LGLPDSFIGR (193 aa). 228–234 is a binding site for ATP; the sequence is SGGVDSS.

As to quaternary structure, homodimer.

It catalyses the reaction XMP + L-glutamine + ATP + H2O = GMP + L-glutamate + AMP + diphosphate + 2 H(+). The protein operates within purine metabolism; GMP biosynthesis; GMP from XMP (L-Gln route): step 1/1. Functionally, catalyzes the synthesis of GMP from XMP. This is GMP synthase [glutamine-hydrolyzing] from Cereibacter sphaeroides (strain ATCC 17025 / ATH 2.4.3) (Rhodobacter sphaeroides).